The sequence spans 563 residues: Membrane protein insertase YidC (563 aa).

Residues 6-26 (TVLWMIFSFSLLLLWNNWQIH) form a helical membrane-spanning segment. Residues 36-70 (PAPEAAATQQPKADANGTAASSTASIPSSPAAAPA) are disordered. Residues 54 to 70 (AASSTASIPSSPAAAPA) show a composition bias toward low complexity. The next 4 helical transmembrane spans lie at 373–393 (WGWT…PLAA), 443–463 (LPMV…LASV), 482–502 (PFFI…KLNP), and 512–532 (VMMI…AGLV).

It belongs to the OXA1/ALB3/YidC family. Type 1 subfamily. In terms of assembly, interacts with the Sec translocase complex via SecD. Specifically interacts with transmembrane segments of nascent integral membrane proteins during membrane integration.

It is found in the cell inner membrane. Required for the insertion and/or proper folding and/or complex formation of integral membrane proteins into the membrane. Involved in integration of membrane proteins that insert both dependently and independently of the Sec translocase complex, as well as at least some lipoproteins. Aids folding of multispanning membrane proteins. The protein is Membrane protein insertase YidC of Bordetella parapertussis (strain 12822 / ATCC BAA-587 / NCTC 13253).